The following is an 819-amino-acid chain: Protein O-mannosyl-transferase tmem260 (819 aa).

Residues 1–10 (MNNSPTLSNT) show a composition bias toward polar residues. A disordered region spans residues 1–68 (MNNSPTLSNT…NNNNNIINVN (68 aa)). Residues 15–68 (NNNNNSNSNSNSNNNNNNNNNNNNNSNNNNNNNNNVNRNVNNRNNNNNNIINVN) are compositionally biased toward low complexity. N-linked (GlcNAc...) asparagine glycosylation is found at asparagine 18, asparagine 38, and asparagine 70. 7 consecutive transmembrane segments (helical) span residues 113–133 (IACI…TQYP), 152–172 (VAHP…SHII), 185–205 (FMSS…VYLW), 210–230 (WCGL…MYQI), 232–252 (GEVF…GVWY), 285–305 (LTNQ…LMFI), and 316–336 (ILSN…LLFI). Asparagine 349 carries N-linked (GlcNAc...) asparagine glycosylation. 4 consecutive transmembrane segments (helical) span residues 391–411 (LIIQ…LNLL), 427–447 (MIIF…NLPI), 459–479 (FFMQ…KSIF), and 505–525 (YLLP…NYNL). Residues asparagine 531, asparagine 686, asparagine 693, and asparagine 783 are each glycosylated (N-linked (GlcNAc...) asparagine).

The protein belongs to the glycosyltransferase 117 (GT117) family.

Its subcellular location is the endoplasmic reticulum membrane. The catalysed reaction is a di-trans,poly-cis-dolichyl beta-D-mannosyl phosphate + L-seryl-[protein] = 3-O-(alpha-D-mannosyl)-L-seryl-[protein] + a di-trans,poly-cis-dolichyl phosphate + H(+). The enzyme catalyses a di-trans,poly-cis-dolichyl beta-D-mannosyl phosphate + L-threonyl-[protein] = 3-O-(alpha-D-mannosyl)-L-threonyl-[protein] + a di-trans,poly-cis-dolichyl phosphate + H(+). Functionally, O-mannosyl-transferase that transfers mannosyl residues to the hydroxyl group of serine or threonine residues of proteins. The protein is Protein O-mannosyl-transferase tmem260 of Dictyostelium discoideum (Social amoeba).